Consider the following 72-residue polypeptide: Translation initiation factor IF-1 (72 aa).

The S1-like domain occupies 1-72 (MAKEELLEMR…TKGRITYRFK (72 aa)).

This sequence belongs to the IF-1 family. In terms of assembly, component of the 30S ribosomal translation pre-initiation complex which assembles on the 30S ribosome in the order IF-2 and IF-3, IF-1 and N-formylmethionyl-tRNA(fMet); mRNA recruitment can occur at any time during PIC assembly.

The protein localises to the cytoplasm. In terms of biological role, one of the essential components for the initiation of protein synthesis. Stabilizes the binding of IF-2 and IF-3 on the 30S subunit to which N-formylmethionyl-tRNA(fMet) subsequently binds. Helps modulate mRNA selection, yielding the 30S pre-initiation complex (PIC). Upon addition of the 50S ribosomal subunit IF-1, IF-2 and IF-3 are released leaving the mature 70S translation initiation complex. This Sphingopyxis alaskensis (strain DSM 13593 / LMG 18877 / RB2256) (Sphingomonas alaskensis) protein is Translation initiation factor IF-1.